A 329-amino-acid polypeptide reads, in one-letter code: uncharacterized protein (329 aa).

Coiled-coil stretches lie at residues 57 to 120 and 225 to 251; these read KKEE…QEVT and QRQR…GNMM.

This is an uncharacterized protein from Homo sapiens (Human).